We begin with the raw amino-acid sequence, 317 residues long: E3 ubiquitin-protein ligase NRDP1 (317 aa).

The segment at 18–57 adopts an RING-type; degenerate zinc-finger fold; that stretch reads CPICSGVLEEPVQAPHCEHAFCNACITQWFSQQQTCPVDR. An SIAH-type; degenerate zinc finger spans residues 78-138; it reads KLQIACDNAV…LPNHNCIKHL (61 aa).

Interacts with USP8, ERBB3, PRKN and BIRC6. Interacts with CSF2RB, EPOR, IL3RA, MYD88 and TBK1. Interacts with CLEC16A. Autoubiquitinated. Autoubiquitination leads to proteasomal degradation. Deubiquitinated by USP8 to get stabilized which induces apoptosis. In terms of tissue distribution, detected in ovary, testis and prostate.

It carries out the reaction S-ubiquitinyl-[E2 ubiquitin-conjugating enzyme]-L-cysteine + [acceptor protein]-L-lysine = [E2 ubiquitin-conjugating enzyme]-L-cysteine + N(6)-ubiquitinyl-[acceptor protein]-L-lysine.. It functions in the pathway protein modification; protein ubiquitination. Acts as E3 ubiquitin-protein ligase and regulates the degradation of target proteins. Polyubiquitinates MYD88. Negatively regulates MYD88-dependent production of pro-inflammatory cytokines. Can promote TRIF-dependent production of type I interferon and inhibits infection with vesicular stomatitis virus. Promotes also activation of TBK1 and IRF3. Involved in the ubiquitination of erythropoietin (EPO) and interleukin-3 (IL-3) receptors. Thus, through maintaining basal levels of cytokine receptors, RNF41 is involved in the control of hematopoietic progenitor cell differentiation into myeloerythroid lineages. Contributes to the maintenance of steady-state ERBB3 levels by mediating its growth factor-independent degradation. Involved in the degradation of the inhibitor of apoptosis BIRC6 and thus is an important regulator of cell death by promoting apoptosis. Also acts as a PRKN modifier that accelerates its degradation, resulting in a reduction of PRKN activity, influencing the balance of intracellular redox state. The RNF41-PRKN pathway regulates autophagosome-lysosome fusion during late mitophagy. Mitophagy is a selective form of autophagy necessary for mitochondrial quality control. The polypeptide is E3 ubiquitin-protein ligase NRDP1 (RNF41) (Homo sapiens (Human)).